The sequence spans 281 residues: Phytanoyl-CoA dioxygenase 1 (281 aa).

2-oxoglutarate is bound by residues K98, M137, 152-154, and W169; that span reads HQD. Residues H152 and D154 each contribute to the Fe cation site. H237 serves as a coordination point for Fe cation. 2 residues coordinate 2-oxoglutarate: S239 and R248.

It belongs to the PhyH family. It depends on Fe cation as a cofactor. The cofactor is L-ascorbate.

The catalysed reaction is phytanoyl-CoA + 2-oxoglutarate + O2 = 2-hydroxyphytanoyl-CoA + succinate + CO2. It functions in the pathway lipid metabolism; fatty acid metabolism. In terms of biological role, converts phytanoyl-CoA to 2-hydroxyphytanoyl-CoA. The protein is Phytanoyl-CoA dioxygenase 1 of Oryza sativa subsp. japonica (Rice).